Here is a 284-residue protein sequence, read N- to C-terminus: uncharacterized protein (284 aa).

N-linked (GlcNAc...) asparagine; by host glycosylation is found at Asn79, Asn102, Asn111, Asn147, Asn162, Asn174, Asn196, Asn211, Asn228, and Asn234. Residues 239–259 (AFTYGSWGVAMLLFAAVMVLV) traverse the membrane as a helical segment.

Belongs to the RL11 family.

It localises to the membrane. This is an uncharacterized protein from Human cytomegalovirus (strain AD169) (HHV-5).